Reading from the N-terminus, the 157-residue chain is Small ribosomal subunit protein uS7cz/uS7cy (157 aa).

It belongs to the universal ribosomal protein uS7 family. Part of the 30S ribosomal subunit.

The protein localises to the plastid. Its subcellular location is the chloroplast. In terms of biological role, one of the primary rRNA binding proteins, it binds directly to 16S rRNA where it nucleates assembly of the head domain of the 30S subunit. The chain is Small ribosomal subunit protein uS7cz/uS7cy (rps7-A) from Welwitschia mirabilis (Tree tumbo).